Consider the following 320-residue polypeptide: 4-hydroxy-3-methylbut-2-enyl diphosphate reductase 2 (320 aa).

C18 serves as a coordination point for [4Fe-4S] cluster. 2 residues coordinate (2E)-4-hydroxy-3-methylbut-2-enyl diphosphate: H47 and H81. Positions 47 and 81 each coordinate dimethylallyl diphosphate. Isopentenyl diphosphate is bound by residues H47 and H81. Residue C103 coordinates [4Fe-4S] cluster. Residue H131 coordinates (2E)-4-hydroxy-3-methylbut-2-enyl diphosphate. H131 is a dimethylallyl diphosphate binding site. H131 lines the isopentenyl diphosphate pocket. Catalysis depends on E133, which acts as the Proton donor. Position 172 (T172) interacts with (2E)-4-hydroxy-3-methylbut-2-enyl diphosphate. Residue C202 coordinates [4Fe-4S] cluster. Residues S230, S231, N232, and S275 each contribute to the (2E)-4-hydroxy-3-methylbut-2-enyl diphosphate site. Residues S230, S231, N232, and S275 each contribute to the dimethylallyl diphosphate site. Isopentenyl diphosphate-binding residues include S230, S231, N232, and S275.

This sequence belongs to the IspH family. [4Fe-4S] cluster serves as cofactor.

It catalyses the reaction isopentenyl diphosphate + 2 oxidized [2Fe-2S]-[ferredoxin] + H2O = (2E)-4-hydroxy-3-methylbut-2-enyl diphosphate + 2 reduced [2Fe-2S]-[ferredoxin] + 2 H(+). It carries out the reaction dimethylallyl diphosphate + 2 oxidized [2Fe-2S]-[ferredoxin] + H2O = (2E)-4-hydroxy-3-methylbut-2-enyl diphosphate + 2 reduced [2Fe-2S]-[ferredoxin] + 2 H(+). Its pathway is isoprenoid biosynthesis; dimethylallyl diphosphate biosynthesis; dimethylallyl diphosphate from (2E)-4-hydroxy-3-methylbutenyl diphosphate: step 1/1. The protein operates within isoprenoid biosynthesis; isopentenyl diphosphate biosynthesis via DXP pathway; isopentenyl diphosphate from 1-deoxy-D-xylulose 5-phosphate: step 6/6. Catalyzes the conversion of 1-hydroxy-2-methyl-2-(E)-butenyl 4-diphosphate (HMBPP) into a mixture of isopentenyl diphosphate (IPP) and dimethylallyl diphosphate (DMAPP). Acts in the terminal step of the DOXP/MEP pathway for isoprenoid precursor biosynthesis. This is 4-hydroxy-3-methylbut-2-enyl diphosphate reductase 2 from Rhodopseudomonas palustris (strain ATCC BAA-98 / CGA009).